Reading from the N-terminus, the 368-residue chain is F-box/kelch-repeat protein At2g44700 (368 aa).

A disordered region spans residues 1 to 23 (MSSSNEPPRKTDQPSSSSASASA). The segment covering 14–23 (PSSSSASASA) has biased composition (low complexity). The region spanning 25 to 71 (PSLFLSLPLEIISMILARVPKRYYPILCSVSKNMRSLVRSPEIHKAR) is the F-box domain. Residues 177 to 221 (KVYVIGGYQDDEIAAESFDLNTQTWEAAPIPDEKESHRWICKANV) form a Kelch repeat.

In Arabidopsis thaliana (Mouse-ear cress), this protein is F-box/kelch-repeat protein At2g44700.